A 428-amino-acid polypeptide reads, in one-letter code: Histidinol dehydrogenase (428 aa).

Positions 234, 256, and 259 each coordinate substrate. Gln256 and His259 together coordinate Zn(2+). Residues Glu324 and His325 each act as proton acceptor in the active site. 4 residues coordinate substrate: His325, Asp358, Glu412, and His417. Asp358 provides a ligand contact to Zn(2+). His417 provides a ligand contact to Zn(2+).

It belongs to the histidinol dehydrogenase family. Zn(2+) serves as cofactor.

It catalyses the reaction L-histidinol + 2 NAD(+) + H2O = L-histidine + 2 NADH + 3 H(+). It functions in the pathway amino-acid biosynthesis; L-histidine biosynthesis; L-histidine from 5-phospho-alpha-D-ribose 1-diphosphate: step 9/9. Catalyzes the sequential NAD-dependent oxidations of L-histidinol to L-histidinaldehyde and then to L-histidine. The sequence is that of Histidinol dehydrogenase from Pelagibacter ubique (strain HTCC1062).